Reading from the N-terminus, the 333-residue chain is D-fructose 1,6-bisphosphatase class 2/sedoheptulose 1,7-bisphosphatase (333 aa).

Mn(2+)-binding residues include Asp33, Glu57, Asp85, and Glu88. Substrate is bound by residues 88 to 90 (EGT), Tyr119, 164 to 166 (RTR), and 186 to 188 (DGD). Glu213 provides a ligand contact to Mn(2+).

This sequence belongs to the FBPase class 2 family. In terms of assembly, homotetramer. Requires Mn(2+) as cofactor.

The catalysed reaction is beta-D-fructose 1,6-bisphosphate + H2O = beta-D-fructose 6-phosphate + phosphate. It catalyses the reaction D-sedoheptulose 1,7-bisphosphate + H2O = D-sedoheptulose 7-phosphate + phosphate. Its pathway is carbohydrate biosynthesis; Calvin cycle. Its function is as follows. Catalyzes the hydrolysis of fructose 1,6-bisphosphate (Fru 1,6-P2) and sedoheptulose 1,7-bisphosphate (Sed 1,7-P2) to fructose 6-phosphate and sedoheptulose 7-phosphate, respectively. The sequence is that of D-fructose 1,6-bisphosphatase class 2/sedoheptulose 1,7-bisphosphatase from Prochlorococcus marinus (strain AS9601).